Consider the following 181-residue polypeptide: ATP synthase subunit delta (181 aa).

This sequence belongs to the ATPase delta chain family. As to quaternary structure, F-type ATPases have 2 components, F(1) - the catalytic core - and F(0) - the membrane proton channel. F(1) has five subunits: alpha(3), beta(3), gamma(1), delta(1), epsilon(1). F(0) has three main subunits: a(1), b(2) and c(10-14). The alpha and beta chains form an alternating ring which encloses part of the gamma chain. F(1) is attached to F(0) by a central stalk formed by the gamma and epsilon chains, while a peripheral stalk is formed by the delta and b chains.

It is found in the cell inner membrane. Its function is as follows. F(1)F(0) ATP synthase produces ATP from ADP in the presence of a proton or sodium gradient. F-type ATPases consist of two structural domains, F(1) containing the extramembraneous catalytic core and F(0) containing the membrane proton channel, linked together by a central stalk and a peripheral stalk. During catalysis, ATP synthesis in the catalytic domain of F(1) is coupled via a rotary mechanism of the central stalk subunits to proton translocation. This protein is part of the stalk that links CF(0) to CF(1). It either transmits conformational changes from CF(0) to CF(1) or is implicated in proton conduction. This chain is ATP synthase subunit delta, found in Desulfotalea psychrophila (strain LSv54 / DSM 12343).